Consider the following 568-residue polypeptide: Methionine--tRNA ligase (568 aa).

The 'HIGH' region signature appears at 10–20 (PYVQSVPHLGN). Cysteine 143, cysteine 146, cysteine 156, and cysteine 159 together coordinate Zn(2+). The 'KMSKS' region signature appears at 333–337 (KFSKS). Lysine 336 serves as a coordination point for ATP.

Belongs to the class-I aminoacyl-tRNA synthetase family. MetG type 1 subfamily. Zn(2+) serves as cofactor.

It is found in the cytoplasm. The enzyme catalyses tRNA(Met) + L-methionine + ATP = L-methionyl-tRNA(Met) + AMP + diphosphate. Its function is as follows. Is required not only for elongation of protein synthesis but also for the initiation of all mRNA translation through initiator tRNA(fMet) aminoacylation. The polypeptide is Methionine--tRNA ligase (Metallosphaera sedula (strain ATCC 51363 / DSM 5348 / JCM 9185 / NBRC 15509 / TH2)).